The primary structure comprises 112 residues: UPF0102 protein TTHA0372 (112 aa).

It belongs to the UPF0102 family.

The protein is UPF0102 protein TTHA0372 of Thermus thermophilus (strain ATCC 27634 / DSM 579 / HB8).